Here is a 247-residue protein sequence, read N- to C-terminus: ATP synthase subunit a, chloroplastic (247 aa).

5 helical membrane-spanning segments follow: residues 38–58 (QVLI…AIAV), 95–115 (VPFI…GALL), 134–154 (INTT…AGLT), 199–219 (LVVV…VMFL), and 220–240 (GLFT…AYIG).

Belongs to the ATPase A chain family. In terms of assembly, F-type ATPases have 2 components, CF(1) - the catalytic core - and CF(0) - the membrane proton channel. CF(1) has five subunits: alpha(3), beta(3), gamma(1), delta(1), epsilon(1). CF(0) has four main subunits: a, b, b' and c.

It localises to the plastid. Its subcellular location is the chloroplast thylakoid membrane. Key component of the proton channel; it plays a direct role in the translocation of protons across the membrane. The chain is ATP synthase subunit a, chloroplastic from Calycanthus floridus var. glaucus (Eastern sweetshrub).